The chain runs to 130 residues: Small ribosomal subunit protein uS11c (130 aa).

The protein belongs to the universal ribosomal protein uS11 family. In terms of assembly, part of the 30S ribosomal subunit.

Its subcellular location is the plastid. The protein localises to the chloroplast. This chain is Small ribosomal subunit protein uS11c, found in Psilotum nudum (Whisk fern).